Here is a 217-residue protein sequence, read N- to C-terminus: Glutathione S-transferase (217 aa).

A GST N-terminal domain is found at 2 to 82 (TIKVHGNPRS…YLAYTHDHQN (81 aa)). Glutathione contacts are provided by residues S11, 40-41 (HK), 53-54 (QV), and 66-67 (ES). The GST C-terminal domain occupies 91 to 217 (EKHEMAAQLV…EKTLALQKQA (127 aa)).

This sequence belongs to the GST superfamily. Phi family.

It localises to the cytoplasm. It catalyses the reaction RX + glutathione = an S-substituted glutathione + a halide anion + H(+). Its function is as follows. Conjugation of reduced glutathione to a wide number of exogenous and endogenous hydrophobic electrophiles. This chain is Glutathione S-transferase (GST), found in Silene vulgaris (Bladder campion).